Consider the following 138-residue polypeptide: ATP synthase epsilon chain (138 aa).

It belongs to the ATPase epsilon chain family. As to quaternary structure, F-type ATPases have 2 components, CF(1) - the catalytic core - and CF(0) - the membrane proton channel. CF(1) has five subunits: alpha(3), beta(3), gamma(1), delta(1), epsilon(1). CF(0) has three main subunits: a, b and c.

The protein resides in the cell inner membrane. Produces ATP from ADP in the presence of a proton gradient across the membrane. This Geobacter sp. (strain M21) protein is ATP synthase epsilon chain.